Here is a 175-residue protein sequence, read N- to C-terminus: Ribosome maturation factor RimM (175 aa).

A PRC barrel domain is found at 96-175 (EDEFYWRELF…RIEVDWDPGF (80 aa)).

It belongs to the RimM family. In terms of assembly, binds ribosomal protein uS19.

It is found in the cytoplasm. An accessory protein needed during the final step in the assembly of 30S ribosomal subunit, possibly for assembly of the head region. Essential for efficient processing of 16S rRNA. May be needed both before and after RbfA during the maturation of 16S rRNA. It has affinity for free ribosomal 30S subunits but not for 70S ribosomes. This is Ribosome maturation factor RimM from Aliivibrio fischeri (strain ATCC 700601 / ES114) (Vibrio fischeri).